Consider the following 123-residue polypeptide: Ribosome-binding factor A (123 aa).

Belongs to the RbfA family. In terms of assembly, monomer. Binds 30S ribosomal subunits, but not 50S ribosomal subunits or 70S ribosomes.

It localises to the cytoplasm. Functionally, one of several proteins that assist in the late maturation steps of the functional core of the 30S ribosomal subunit. Associates with free 30S ribosomal subunits (but not with 30S subunits that are part of 70S ribosomes or polysomes). Required for efficient processing of 16S rRNA. May interact with the 5'-terminal helix region of 16S rRNA. The protein is Ribosome-binding factor A of Trichlorobacter lovleyi (strain ATCC BAA-1151 / DSM 17278 / SZ) (Geobacter lovleyi).